Consider the following 170-residue polypeptide: Fimbrial protein (170 aa).

Residues 1-7 constitute a propeptide, leader sequence; the sequence is MNTLQKG. An N-methylphenylalanine modification is found at F8. The chain crosses the membrane as a helical span at residues 8-28; that stretch reads FTLIELMIVIAIVGILAAVAL. S70 carries O-linked (Gal...) serine glycosylation. Position 100 is an O-(sn-1-glycerophosphoryl)serine (S100). A disulfide bond links C127 and C163.

The protein belongs to the N-Me-Phe pilin family. In terms of assembly, the pili are polar flexible filaments of about 5.4 nanometers diameter and 2.5 micrometers average length; they consist of only a single polypeptide chain arranged in a helical configuration of five subunits per turn in the assembled pilus. O-linked glycan has been reported to consist either of the Gal(alpha1-3) GlcNAc disaccharide, or the Gal(beta 1-4) Gal(alpha 1-3) 2,4-diacetamido-2,4,6-trideoxyhexose trisaccharide.

It localises to the fimbrium. It is found in the membrane. Functionally, major component of the type IV pilus (T4P) that plays a role in cellular adherence, microcolony formation as well as twitching motility. The sequence is that of Fimbrial protein (pilE) from Neisseria meningitidis serogroup B (strain ATCC BAA-335 / MC58).